Consider the following 454-residue polypeptide: Bifunctional protein GlmU (454 aa).

Positions M1–R228 are pyrophosphorylase. UDP-N-acetyl-alpha-D-glucosamine-binding positions include L8–G11, K22, Q73, and G78–T79. A Mg(2+)-binding site is contributed by D103. UDP-N-acetyl-alpha-D-glucosamine is bound by residues G140, E154, N169, and N226. N226 serves as a coordination point for Mg(2+). Positions A229–N249 are linker. The segment at G250–K454 is N-acetyltransferase. UDP-N-acetyl-alpha-D-glucosamine contacts are provided by R331 and K349. The active-site Proton acceptor is the H361. 2 residues coordinate UDP-N-acetyl-alpha-D-glucosamine: Y364 and N375. Residues N384 to Y385, A421, and R438 contribute to the acetyl-CoA site.

In the N-terminal section; belongs to the N-acetylglucosamine-1-phosphate uridyltransferase family. It in the C-terminal section; belongs to the transferase hexapeptide repeat family. In terms of assembly, homotrimer. It depends on Mg(2+) as a cofactor.

The protein localises to the cytoplasm. The enzyme catalyses alpha-D-glucosamine 1-phosphate + acetyl-CoA = N-acetyl-alpha-D-glucosamine 1-phosphate + CoA + H(+). It catalyses the reaction N-acetyl-alpha-D-glucosamine 1-phosphate + UTP + H(+) = UDP-N-acetyl-alpha-D-glucosamine + diphosphate. The protein operates within nucleotide-sugar biosynthesis; UDP-N-acetyl-alpha-D-glucosamine biosynthesis; N-acetyl-alpha-D-glucosamine 1-phosphate from alpha-D-glucosamine 6-phosphate (route II): step 2/2. It participates in nucleotide-sugar biosynthesis; UDP-N-acetyl-alpha-D-glucosamine biosynthesis; UDP-N-acetyl-alpha-D-glucosamine from N-acetyl-alpha-D-glucosamine 1-phosphate: step 1/1. It functions in the pathway bacterial outer membrane biogenesis; LPS lipid A biosynthesis. Catalyzes the last two sequential reactions in the de novo biosynthetic pathway for UDP-N-acetylglucosamine (UDP-GlcNAc). The C-terminal domain catalyzes the transfer of acetyl group from acetyl coenzyme A to glucosamine-1-phosphate (GlcN-1-P) to produce N-acetylglucosamine-1-phosphate (GlcNAc-1-P), which is converted into UDP-GlcNAc by the transfer of uridine 5-monophosphate (from uridine 5-triphosphate), a reaction catalyzed by the N-terminal domain. This is Bifunctional protein GlmU from Clostridium perfringens (strain SM101 / Type A).